The chain runs to 128 residues: Large ribosomal subunit protein bL17 (128 aa).

This sequence belongs to the bacterial ribosomal protein bL17 family. As to quaternary structure, part of the 50S ribosomal subunit. Contacts protein L32.

This chain is Large ribosomal subunit protein bL17, found in Streptococcus equi subsp. zooepidemicus (strain H70).